The chain runs to 62 residues: Large ribosomal subunit protein uL30 (62 aa).

Belongs to the universal ribosomal protein uL30 family. Part of the 50S ribosomal subunit.

The sequence is that of Large ribosomal subunit protein uL30 from Alkalilimnicola ehrlichii (strain ATCC BAA-1101 / DSM 17681 / MLHE-1).